We begin with the raw amino-acid sequence, 235 residues long: 2-C-methyl-D-erythritol 4-phosphate cytidylyltransferase (235 aa).

This sequence belongs to the IspD/TarI cytidylyltransferase family. IspD subfamily.

The enzyme catalyses 2-C-methyl-D-erythritol 4-phosphate + CTP + H(+) = 4-CDP-2-C-methyl-D-erythritol + diphosphate. Its pathway is isoprenoid biosynthesis; isopentenyl diphosphate biosynthesis via DXP pathway; isopentenyl diphosphate from 1-deoxy-D-xylulose 5-phosphate: step 2/6. In terms of biological role, catalyzes the formation of 4-diphosphocytidyl-2-C-methyl-D-erythritol from CTP and 2-C-methyl-D-erythritol 4-phosphate (MEP). In Ectopseudomonas mendocina (strain ymp) (Pseudomonas mendocina), this protein is 2-C-methyl-D-erythritol 4-phosphate cytidylyltransferase.